Here is a 357-residue protein sequence, read N- to C-terminus: 3-dehydroquinate synthase (357 aa).

Residues 69–74 (DGEKNK), 103–107 (GVIGD), 127–128 (TT), K140, and K149 each bind NAD(+). Residues E182, H245, and H262 each contribute to the Zn(2+) site.

Belongs to the sugar phosphate cyclases superfamily. Dehydroquinate synthase family. Co(2+) serves as cofactor. The cofactor is Zn(2+). Requires NAD(+) as cofactor.

The protein localises to the cytoplasm. It carries out the reaction 7-phospho-2-dehydro-3-deoxy-D-arabino-heptonate = 3-dehydroquinate + phosphate. It participates in metabolic intermediate biosynthesis; chorismate biosynthesis; chorismate from D-erythrose 4-phosphate and phosphoenolpyruvate: step 2/7. Catalyzes the conversion of 3-deoxy-D-arabino-heptulosonate 7-phosphate (DAHP) to dehydroquinate (DHQ). This Shewanella denitrificans (strain OS217 / ATCC BAA-1090 / DSM 15013) protein is 3-dehydroquinate synthase.